Consider the following 455-residue polypeptide: Probable glycine dehydrogenase (decarboxylating) subunit 1 (455 aa).

This sequence belongs to the GcvP family. N-terminal subunit subfamily. The glycine cleavage system is composed of four proteins: P, T, L and H. In this organism, the P 'protein' is a heterodimer of two subunits.

It catalyses the reaction N(6)-[(R)-lipoyl]-L-lysyl-[glycine-cleavage complex H protein] + glycine + H(+) = N(6)-[(R)-S(8)-aminomethyldihydrolipoyl]-L-lysyl-[glycine-cleavage complex H protein] + CO2. In terms of biological role, the glycine cleavage system catalyzes the degradation of glycine. The P protein binds the alpha-amino group of glycine through its pyridoxal phosphate cofactor; CO(2) is released and the remaining methylamine moiety is then transferred to the lipoamide cofactor of the H protein. The polypeptide is Probable glycine dehydrogenase (decarboxylating) subunit 1 (Francisella tularensis subsp. holarctica (strain FTNF002-00 / FTA)).